The following is a 184-amino-acid chain: Nucleoside triphosphate pyrophosphatase (184 aa).

The active-site Proton acceptor is the Asp-71.

This sequence belongs to the Maf family. A divalent metal cation serves as cofactor.

It is found in the cytoplasm. It catalyses the reaction a ribonucleoside 5'-triphosphate + H2O = a ribonucleoside 5'-phosphate + diphosphate + H(+). The catalysed reaction is a 2'-deoxyribonucleoside 5'-triphosphate + H2O = a 2'-deoxyribonucleoside 5'-phosphate + diphosphate + H(+). In terms of biological role, nucleoside triphosphate pyrophosphatase. May have a dual role in cell division arrest and in preventing the incorporation of modified nucleotides into cellular nucleic acids. The chain is Nucleoside triphosphate pyrophosphatase from Synechococcus sp. (strain CC9605).